The sequence spans 212 residues: ER lumen protein-retaining receptor 2 (212 aa).

Residues 1–4 (MNIF) lie on the Lumenal side of the membrane. A helical transmembrane segment spans residues 5–24 (RLTGDLSHLAAIIILLLKIW). The Cytoplasmic portion of the chain corresponds to 25-32 (KSRSCAGI). A helical membrane pass occupies residues 33–52 (SGKSQLLFALVFTTRYLDLF). The interval 47-48 (RY) is interaction with the K-D-E-L motif on target proteins. At 53-58 (TSFISL) the chain is on the lumenal side. A helical transmembrane segment spans residues 59-79 (YNTSMKLIYIACSYATVYLIY). Residues 80–92 (MKFKATYDGNHDT) are Cytoplasmic-facing. The helical transmembrane segment at 93–110 (FRVEFLIVPVGGLSFLVN) threads the bilayer. The Lumenal portion of the chain corresponds to 111–116 (HDFSPL). The chain crosses the membrane as a helical span at residues 117 to 135 (EILWTFSIYLESVAILPQL). Topologically, residues 136-149 (FMISKTGEAETITT) are cytoplasmic. The helical transmembrane segment at 150–168 (HYLFFLGLYRALYLVNWIW) threads the bilayer. The segment at 159–169 (RALYLVNWIWR) is interaction with the K-D-E-L motif on target proteins. The Lumenal portion of the chain corresponds to 169–178 (RYYFEGFFDL). A helical transmembrane segment spans residues 179–199 (IAVVAGVVQTVLYCDFFYLYV). Residues 200–212 (TKVLKGKKLSLPA) lie on the Cytoplasmic side of the membrane. Positions 204-207 (KGKK) are important for recycling of cargo proteins with the sequence motif K-D-E-L from the Golgi to the endoplasmic reticulum.

It belongs to the ERD2 family.

Its subcellular location is the endoplasmic reticulum membrane. The protein resides in the golgi apparatus membrane. It is found in the cytoplasmic vesicle. It localises to the COPI-coated vesicle membrane. In terms of biological role, membrane receptor that binds the K-D-E-L sequence motif in the C-terminal part of endoplasmic reticulum resident proteins and maintains their localization in that compartment by participating to their vesicle-mediated recycling back from the Golgi. Binding is pH dependent, and is optimal at pH 5-5.4. This chain is ER lumen protein-retaining receptor 2 (KDELR2), found in Gallus gallus (Chicken).